We begin with the raw amino-acid sequence, 365 residues long: Flagellin 1 (365 aa).

It belongs to the bacterial flagellin family.

The protein resides in the secreted. It is found in the bacterial flagellum. Flagellin is the subunit protein which polymerizes to form the filaments of bacterial flagella. The chain is Flagellin 1 (fliC1) from Proteus mirabilis.